Reading from the N-terminus, the 359-residue chain is Probable dual-specificity RNA methyltransferase RlmN (359 aa).

Catalysis depends on glutamate 91, which acts as the Proton acceptor. Residues 97–329 (QHYGHSVCVT…KKNGVNCVVR (233 aa)) form the Radical SAM core domain. A disulfide bridge links cysteine 104 with cysteine 340. [4Fe-4S] cluster contacts are provided by cysteine 111, cysteine 115, and cysteine 118. S-adenosyl-L-methionine is bound by residues 163 to 164 (GE), serine 195, 218 to 220 (SLH), and asparagine 296. The S-methylcysteine intermediate role is filled by cysteine 340.

The protein belongs to the radical SAM superfamily. RlmN family. [4Fe-4S] cluster is required as a cofactor.

It localises to the cytoplasm. The catalysed reaction is adenosine(2503) in 23S rRNA + 2 reduced [2Fe-2S]-[ferredoxin] + 2 S-adenosyl-L-methionine = 2-methyladenosine(2503) in 23S rRNA + 5'-deoxyadenosine + L-methionine + 2 oxidized [2Fe-2S]-[ferredoxin] + S-adenosyl-L-homocysteine. It catalyses the reaction adenosine(37) in tRNA + 2 reduced [2Fe-2S]-[ferredoxin] + 2 S-adenosyl-L-methionine = 2-methyladenosine(37) in tRNA + 5'-deoxyadenosine + L-methionine + 2 oxidized [2Fe-2S]-[ferredoxin] + S-adenosyl-L-homocysteine. Specifically methylates position 2 of adenine 2503 in 23S rRNA and position 2 of adenine 37 in tRNAs. This chain is Probable dual-specificity RNA methyltransferase RlmN, found in Streptococcus pyogenes serotype M2 (strain MGAS10270).